We begin with the raw amino-acid sequence, 144 residues long: uncharacterized protein (144 aa).

This is an uncharacterized protein from Archaeoglobus fulgidus (strain ATCC 49558 / DSM 4304 / JCM 9628 / NBRC 100126 / VC-16).